A 93-amino-acid chain; its full sequence is Small ribosomal subunit protein bS18 (93 aa).

Belongs to the bacterial ribosomal protein bS18 family. As to quaternary structure, part of the 30S ribosomal subunit. Forms a tight heterodimer with protein bS6.

In terms of biological role, binds as a heterodimer with protein bS6 to the central domain of the 16S rRNA, where it helps stabilize the platform of the 30S subunit. In Acidovorax ebreus (strain TPSY) (Diaphorobacter sp. (strain TPSY)), this protein is Small ribosomal subunit protein bS18.